We begin with the raw amino-acid sequence, 284 residues long: D-tagatose-1,6-bisphosphate aldolase subunit GatY (284 aa).

The Proton donor role is filled by aspartate 82. Positions 83 and 180 each coordinate Zn(2+). Position 181 (glycine 181) interacts with dihydroxyacetone phosphate. A Zn(2+)-binding site is contributed by histidine 208. Residues glycine 209–serine 211 and asparagine 230–threonine 233 contribute to the dihydroxyacetone phosphate site.

This sequence belongs to the class II fructose-bisphosphate aldolase family. TagBP aldolase GatY subfamily. As to quaternary structure, forms a complex with GatZ. Zn(2+) is required as a cofactor.

The catalysed reaction is D-tagatofuranose 1,6-bisphosphate = D-glyceraldehyde 3-phosphate + dihydroxyacetone phosphate. The protein operates within carbohydrate metabolism; D-tagatose 6-phosphate degradation; D-glyceraldehyde 3-phosphate and glycerone phosphate from D-tagatose 6-phosphate: step 2/2. In terms of biological role, catalytic subunit of the tagatose-1,6-bisphosphate aldolase GatYZ, which catalyzes the reversible aldol condensation of dihydroxyacetone phosphate (DHAP or glycerone-phosphate) with glyceraldehyde 3-phosphate (G3P) to produce tagatose 1,6-bisphosphate (TBP). Requires GatZ subunit for full activity and stability. Is involved in the catabolism of galactitol. This Escherichia coli O6:H1 (strain CFT073 / ATCC 700928 / UPEC) protein is D-tagatose-1,6-bisphosphate aldolase subunit GatY.